A 261-amino-acid chain; its full sequence is Eukaryotic translation initiation factor 3 subunit G (261 aa).

Positions Gln156–Glu180 are disordered. The span at Gly168–Glu180 shows a compositional bias: basic and acidic residues. In terms of domain architecture, RRM spans Asn181–Pro259.

Belongs to the eIF-3 subunit G family. Component of the eukaryotic translation initiation factor 3 (eIF-3) complex.

The protein resides in the cytoplasm. RNA-binding component of the eukaryotic translation initiation factor 3 (eIF-3) complex, which is involved in protein synthesis of a specialized repertoire of mRNAs and, together with other initiation factors, stimulates binding of mRNA and methionyl-tRNAi to the 40S ribosome. The eIF-3 complex specifically targets and initiates translation of a subset of mRNAs involved in cell proliferation. This subunit can bind 18S rRNA. In Caenorhabditis briggsae, this protein is Eukaryotic translation initiation factor 3 subunit G.